The chain runs to 210 residues: MAIERYFIREAVKEMLIDEFLEKELRRAGYGGLDIKKTPLGTKVIIFAANPGYVIGRGGRRIRELTRILERQFGLENPQIDVQEIKNPYLNAKVQAVRIAQALERGIHFRRAAYAAMRAIMSNGARGVEIRISGKLTGERAKSVRFYQGYLAKVGNPAETLVSKGYAQALLKLGVIGVKVAIMPPDARLPDEIEIIEKPVEEEVSSNEAE.

In terms of domain architecture, KH type-2 spans 17–86 (IDEFLEKELR…NPQIDVQEIK (70 aa)).

It belongs to the universal ribosomal protein uS3 family. As to quaternary structure, part of the 30S ribosomal subunit.

In terms of biological role, binds the lower part of the 30S subunit head. The chain is Small ribosomal subunit protein uS3 from Pyrococcus abyssi (strain GE5 / Orsay).